Here is a 1104-residue protein sequence, read N- to C-terminus: Isoleucine--tRNA ligase (1104 aa).

Positions Pro48–Thr58 match the 'HIGH' region motif. Residues Lys644–Ser648 carry the 'KMSKS' region motif. Residue Lys647 coordinates ATP.

Belongs to the class-I aminoacyl-tRNA synthetase family. IleS type 2 subfamily. Monomer. Zn(2+) is required as a cofactor.

Its subcellular location is the cytoplasm. It carries out the reaction tRNA(Ile) + L-isoleucine + ATP = L-isoleucyl-tRNA(Ile) + AMP + diphosphate. In terms of biological role, catalyzes the attachment of isoleucine to tRNA(Ile). As IleRS can inadvertently accommodate and process structurally similar amino acids such as valine, to avoid such errors it has two additional distinct tRNA(Ile)-dependent editing activities. One activity is designated as 'pretransfer' editing and involves the hydrolysis of activated Val-AMP. The other activity is designated 'posttransfer' editing and involves deacylation of mischarged Val-tRNA(Ile). This Methanocella arvoryzae (strain DSM 22066 / NBRC 105507 / MRE50) protein is Isoleucine--tRNA ligase.